Here is a 131-residue protein sequence, read N- to C-terminus: Profilin-1 (131 aa).

It belongs to the profilin family. As to quaternary structure, occurs in many kinds of cells as a complex with monomeric actin in a 1:1 ratio.

The protein resides in the cytoplasm. Its subcellular location is the cytoskeleton. In terms of biological role, binds to actin and affects the structure of the cytoskeleton. At high concentrations, profilin prevents the polymerization of actin, whereas it enhances it at low concentrations. By binding to PIP2, it inhibits the formation of IP3 and DG. This is Profilin-1 (PRO1) from Triticum aestivum (Wheat).